Consider the following 328-residue polypeptide: Fe(3+) ions import ATP-binding protein FbpC 1 (328 aa).

Residues 7-237 (LVLKNITKAF…PNSLFLANFM (231 aa)) form the ABC transporter domain. An ATP-binding site is contributed by 39–46 (GPSGCGKT).

The protein belongs to the ABC transporter superfamily. Fe(3+) ion importer (TC 3.A.1.10) family. In terms of assembly, the complex is composed of two ATP-binding proteins (FbpC), two transmembrane proteins (FbpB) and a solute-binding protein (FbpA).

The protein localises to the cell inner membrane. It carries out the reaction Fe(3+)(out) + ATP + H2O = Fe(3+)(in) + ADP + phosphate + H(+). Its function is as follows. Part of the ABC transporter complex FbpABC involved in Fe(3+) ions import. Responsible for energy coupling to the transport system. The protein is Fe(3+) ions import ATP-binding protein FbpC 1 of Haemophilus influenzae (strain ATCC 51907 / DSM 11121 / KW20 / Rd).